Reading from the N-terminus, the 92-residue chain is Small ribosomal subunit protein uS19 (92 aa).

Belongs to the universal ribosomal protein uS19 family.

Functionally, protein S19 forms a complex with S13 that binds strongly to the 16S ribosomal RNA. The chain is Small ribosomal subunit protein uS19 from Shewanella amazonensis (strain ATCC BAA-1098 / SB2B).